We begin with the raw amino-acid sequence, 705 residues long: Prolyl endopeptidase (705 aa).

Positions 1 to 20 are cleaved as a signal peptide; sequence MKYNKLSVAVAAFAFAAVSA. Residues S556 and H675 each act as charge relay system in the active site.

It belongs to the peptidase S9A family. As to quaternary structure, monomer.

It is found in the periplasm. The enzyme catalyses Hydrolysis of Pro-|-Xaa &gt;&gt; Ala-|-Xaa in oligopeptides.. Functionally, cleaves peptide bonds on the C-terminal side of prolyl residues within peptides that are up to approximately 30 amino acids long. Has an absolute requirement for an X-Pro bond in the trans configuration immediately preceding the Pro-Y scissible bond. This Elizabethkingia meningoseptica (Chryseobacterium meningosepticum) protein is Prolyl endopeptidase (f1pep1).